The sequence spans 504 residues: WD repeat-containing protein 55 homolog (504 aa).

Disordered stretches follow at residues 1–21 (MDRH…DIDD) and 33–132 (QEVL…DDDD). Composition is skewed to acidic residues over residues 12–21 (NEDELDDIDD) and 33–48 (QEVL…EYDL). The span at 63-74 (SSSNESISSDGS) shows a compositional bias: low complexity. Acidic residues predominate over residues 78–89 (NAEDSDSDDSMI). WD repeat units follow at residues 156-195 (KLED…NKLL), 200-239 (VHAK…LKKL), 243-281 (AHDD…AIFE), 284-323 (EVED…LYVQ), 326-365 (PYEE…YHCD), and 410-449 (QHNM…DFGD). The segment at 477–504 (FFADMTKDQDDDDNDGGNDTAAGPSNVT) is disordered.

This sequence belongs to the WD repeat WDR55 family.

This Drosophila virilis (Fruit fly) protein is WD repeat-containing protein 55 homolog.